We begin with the raw amino-acid sequence, 108 residues long: MKKNTHPNYQQVLFVDSSTGYKFVCGSTYQSDKTEVFEGQEYPVCYVSVSSASHPFFTGSKRLVDAEGRVDKFLKRYSNVKPAQPAQAAVEEAPAVKSKKKAPIKKKK.

The interval 88–108 is disordered; it reads AAVEEAPAVKSKKKAPIKKKK. Basic residues predominate over residues 97–108; that stretch reads KSKKKAPIKKKK.

Belongs to the bacterial ribosomal protein bL31 family. Type B subfamily. As to quaternary structure, part of the 50S ribosomal subunit.

The sequence is that of Large ribosomal subunit protein bL31B from Chlamydia abortus (strain DSM 27085 / S26/3) (Chlamydophila abortus).